Consider the following 691-residue polypeptide: Ribonuclease J (691 aa).

Residues 1 to 89 (MTDNNHYENN…TRNYAKEELD (89 aa)) form a disordered region. The interval 1–132 (MTDNNHYENN…KIQVEHLNPH (132 aa)) is loss of region decreases protein stability, still able to interact with RhpA, but has decreased RNase activity even on ssRNA. Residues 10–19 (NESNENSSEN) are compositionally biased toward low complexity. Positions 41 to 57 (RENAQKNGESSHHEAPS) are enriched in basic and acidic residues. Residues 58-82 (HHKKEHRPNKKPNNHHKQKHAKTRN) show a composition bias toward basic residues. N6-acetyllysine is present on residues lysine 134 and lysine 140. Zn(2+) contacts are provided by histidine 208, histidine 210, aspartate 212, histidine 213, histidine 277, and aspartate 299. An N6-acetyllysine mark is found at lysine 323, lysine 337, and lysine 397. A substrate-binding site is contributed by 500 to 504 (HVSGH). An N6-acetyllysine modification is found at lysine 511. Position 526 (histidine 526) interacts with Zn(2+). Residues lysine 547, lysine 634, and lysine 649 each carry the N6-acetyllysine modification.

The protein belongs to the metallo-beta-lactamase superfamily. RNA-metabolizing metallo-beta-lactamase-like family. Bacterial RNase J subfamily. In terms of assembly, homodimer. Homotetramer; dimer of homodimers. Interacts with RNA helicase RphA, might be a member of a minimal RNA degradosome complex. Zn(2+) serves as cofactor. Post-translationally, acetylated on nine lysine residues. Some of the residues are acetylated by multiple different mechanisms. RimL is partially responsible for the acetylation of Lys-323, Lys-397 and Lys-649. HPB8_1270 homolog is partially responsible for the acetylation of Lys-323, Lys-397, Lys-511 and Lys-649. Acetyl-phosphate-mediated non-enzymatic acetylation pathway takes part in the acetylation of Lys-134, Lys-323, Lys-397, Lys-511 and Lys-649. Acetylation of the remaining residues Lys-140, Lys-337, Lys-547 and Lys-634 occurs by a yet undetermined mechanism. Acetylation on a number of these residues is important for growth regulation and proper cell morphology.

It localises to the cytoplasm. With respect to regulation, catalytic activity is regulated by the balance between homodimers and homotetramers, with homotetramers being the active forms of this enzyme. Acetylation allosterically regulates the homooligomerization state and hence the catalytic activity. Its function is as follows. An RNase that has 5'-3' exoribonuclease and endoribonuclease activity. Degrades 5'-monophosphorylated ssRNA and dsRNA, considerably more active on ssRNA. Association with RhpA significantly increases the dsRNase activity. Degrades RNA substrate with hairpin structures at both ends with low activity, but presence of RhpA significantly increases the activity on this substrate. Stimulates ATPase activity of RNA helicase RhpA. Involved in stabilization of mRNA but apparently not rRNA. In Helicobacter pylori (strain B128), this protein is Ribonuclease J.